A 414-amino-acid polypeptide reads, in one-letter code: Gamma-glutamyl phosphate reductase (414 aa).

The protein belongs to the gamma-glutamyl phosphate reductase family.

The protein localises to the cytoplasm. It carries out the reaction L-glutamate 5-semialdehyde + phosphate + NADP(+) = L-glutamyl 5-phosphate + NADPH + H(+). It functions in the pathway amino-acid biosynthesis; L-proline biosynthesis; L-glutamate 5-semialdehyde from L-glutamate: step 2/2. In terms of biological role, catalyzes the NADPH-dependent reduction of L-glutamate 5-phosphate into L-glutamate 5-semialdehyde and phosphate. The product spontaneously undergoes cyclization to form 1-pyrroline-5-carboxylate. The chain is Gamma-glutamyl phosphate reductase from Geobacillus kaustophilus (strain HTA426).